The primary structure comprises 357 residues: Inositol-tetrakisphosphate 1-kinase 3 (357 aa).

Residues K56 and K98 each contribute to the 1D-myo-inositol 1,3,4-trisphosphate site. R133 and K183 together coordinate ATP. 1D-myo-inositol 1,3,4-trisphosphate-binding residues include H190 and K222. ATP-binding positions include 211-222 (QEFVNHGGVLFK), S237, and S262. The Mg(2+) site is built by D302, D317, and N319. Residue N319 participates in 1D-myo-inositol 1,3,4-trisphosphate binding.

It belongs to the ITPK1 family. As to quaternary structure, monomer. Mg(2+) is required as a cofactor.

It carries out the reaction 1D-myo-inositol 3,4,5,6-tetrakisphosphate + ATP = 1D-myo-inositol 1,3,4,5,6-pentakisphosphate + ADP + H(+). The enzyme catalyses 1D-myo-inositol 1,3,4-trisphosphate + ATP = 1D-myo-inositol 1,3,4,5-tetrakisphosphate + ADP + H(+). The catalysed reaction is 1D-myo-inositol 1,3,4-trisphosphate + ATP = 1D-myo-inositol 1,3,4,6-tetrakisphosphate + ADP + H(+). Its function is as follows. Kinase that can phosphorylate various inositol polyphosphate such as Ins(3,4,5,6)P4 or Ins(1,3,4)P3 and participates in phytic acid biosynthesis in developing seeds. Phytic acid is the primary storage form of phosphorus in cereal grains and other plant seeds. The chain is Inositol-tetrakisphosphate 1-kinase 3 (ITPK3) from Oryza sativa subsp. indica (Rice).